Here is a 99-residue protein sequence, read N- to C-terminus: Large ribosomal subunit protein uL23 (99 aa).

This sequence belongs to the universal ribosomal protein uL23 family. As to quaternary structure, part of the 50S ribosomal subunit. Contacts protein L29, and trigger factor when it is bound to the ribosome.

Functionally, one of the early assembly proteins it binds 23S rRNA. One of the proteins that surrounds the polypeptide exit tunnel on the outside of the ribosome. Forms the main docking site for trigger factor binding to the ribosome. This chain is Large ribosomal subunit protein uL23, found in Agathobacter rectalis (strain ATCC 33656 / DSM 3377 / JCM 17463 / KCTC 5835 / VPI 0990) (Eubacterium rectale).